Consider the following 738-residue polypeptide: Conserved oligomeric Golgi complex subunit 4 (738 aa).

This sequence belongs to the COG4 family. As to quaternary structure, component of the conserved oligomeric Golgi complex which is composed of eight different subunits and is required for normal Golgi morphology and localization. Interacts with COG2 and COG3.

Its subcellular location is the golgi apparatus membrane. Its function is as follows. Required for normal Golgi function. In Arabidopsis thaliana (Mouse-ear cress), this protein is Conserved oligomeric Golgi complex subunit 4.